Consider the following 267-residue polypeptide: Glutamate racemase (267 aa).

Substrate is bound by residues 10–11 (DS) and 42–43 (YG). The active-site Proton donor/acceptor is Cys73. 74 to 75 (NT) is a substrate binding site. The Proton donor/acceptor role is filled by Cys183. Residue 184–185 (TH) coordinates substrate.

Belongs to the aspartate/glutamate racemases family.

The enzyme catalyses L-glutamate = D-glutamate. It functions in the pathway cell wall biogenesis; peptidoglycan biosynthesis. Functionally, provides the (R)-glutamate required for cell wall biosynthesis. The protein is Glutamate racemase of Lactobacillus acidophilus (strain ATCC 700396 / NCK56 / N2 / NCFM).